The following is a 185-amino-acid chain: Probable chorismate pyruvate-lyase (185 aa).

Substrate contacts are provided by arginine 84, leucine 122, and glutamate 178.

Belongs to the UbiC family.

Its subcellular location is the cytoplasm. It catalyses the reaction chorismate = 4-hydroxybenzoate + pyruvate. It functions in the pathway cofactor biosynthesis; ubiquinone biosynthesis. In terms of biological role, removes the pyruvyl group from chorismate, with concomitant aromatization of the ring, to provide 4-hydroxybenzoate (4HB) for the ubiquinone pathway. This chain is Probable chorismate pyruvate-lyase, found in Hydrogenovibrio crunogenus (strain DSM 25203 / XCL-2) (Thiomicrospira crunogena).